We begin with the raw amino-acid sequence, 497 residues long: WASH complex subunit homolog 1 (497 aa).

The disordered stretch occupies residues 306 to 497 (EASEPTEAEA…PPNFDDEEWD (192 aa)). Pro residues predominate over residues 323 to 339 (LPPPPPPMKLDPSPQPA). The span at 341 to 350 (TPVEITEIPP) shows a compositional bias: low complexity. Pro residues predominate over residues 351–372 (IISPPAPPPPPPPPPPPPPPQT). Positions 390–412 (GRSDLMAAIRAAGGAGNAKLSRI) constitute a WH2 domain.

Belongs to the WASH1 family. As to quaternary structure, component of the WASH core complex. Component of the DHIC (ddl-1-containing hsf-1 inhibitory) complex, which contains at least ddl-1, ddl-2, hsb-1 and hsf-1. Within the complex, interacts with ddl-1. Formation of the DHIC may be dependent upon the Insulin/IGF-1-like signaling (IIS) mediated pathway. Expressed in several neurons located throughout the body.

Its function is as follows. Acts as a component of the WASH core complex that functions as a nucleation-promoting factor (NPF) at the surface of endosomes, where it recruits and activates the Arp2/3 complex to induce actin polymerization, playing a key role in the fission of tubules that serve as transport intermediates during endosome sorting. Acts as a component of the DHIC (ddl-1-containing hsf-1 inhibitory complex) which modulates lifespan by sequestering the heat shock transcription factor hsf-1 to negatively regulate its binding to DNA and its transcriptional activity. The polypeptide is WASH complex subunit homolog 1 (Caenorhabditis elegans).